Consider the following 150-residue polypeptide: Globin-1 (150 aa).

A Globin domain is found at 11 to 150 (ALTAAEKATI…MICILLRSSY (140 aa)). 2 residues coordinate heme b: His-74 and His-106.

The protein belongs to the globin family. Monomer.

This chain is Globin-1, found in Petromyzon marinus (Sea lamprey).